The primary structure comprises 30 residues: Bacteriocin curvaticin (30 aa).

The cysteines at positions 9 and 14 are disulfide-linked.

It localises to the secreted. Has antibacterial activity against the Gram-positive bacterium L.monocytogenes. The polypeptide is Bacteriocin curvaticin (Latilactobacillus curvatus (Lactobacillus curvatus)).